A 601-amino-acid polypeptide reads, in one-letter code: Elongation factor 4 (601 aa).

The region spanning 7–189 (RNIRNFSIIA…AIVHRIPPPK (183 aa)) is the tr-type G domain. GTP contacts are provided by residues 19–24 (DHGKST) and 136–139 (NKID).

This sequence belongs to the TRAFAC class translation factor GTPase superfamily. Classic translation factor GTPase family. LepA subfamily.

The protein localises to the cell inner membrane. The catalysed reaction is GTP + H2O = GDP + phosphate + H(+). Functionally, required for accurate and efficient protein synthesis under certain stress conditions. May act as a fidelity factor of the translation reaction, by catalyzing a one-codon backward translocation of tRNAs on improperly translocated ribosomes. Back-translocation proceeds from a post-translocation (POST) complex to a pre-translocation (PRE) complex, thus giving elongation factor G a second chance to translocate the tRNAs correctly. Binds to ribosomes in a GTP-dependent manner. This Xanthomonas campestris pv. campestris (strain 8004) protein is Elongation factor 4.